A 143-amino-acid chain; its full sequence is MSAVPSVQTFGKKKSATAVAHVKAGKGLIKVNGSPITLVQPEILRFKVYEPLLLVGLDKFANIDIRVRVTGGGHVSQVYAIRQAIAKGLVAYHQKFVDEQSKNELKKAFTSYDRTLLIADSRRPEPKKFGGRGARARFQKSYR.

Positions 123–143 (RPEPKKFGGRGARARFQKSYR) are disordered. A compositionally biased stretch (basic residues) spans 134–143 (ARARFQKSYR).

Belongs to the universal ribosomal protein uS9 family.

The protein is Small ribosomal subunit protein uS9 (RPS16) of Eremothecium gossypii (strain ATCC 10895 / CBS 109.51 / FGSC 9923 / NRRL Y-1056) (Yeast).